Consider the following 152-residue polypeptide: NADH-quinone oxidoreductase subunit I 1 (152 aa).

2 4Fe-4S ferredoxin-type domains span residues 53–83 (MKLG…MKSD) and 94–123 (VTYV…LGTG). [4Fe-4S] cluster is bound by residues Cys-63, Cys-66, Cys-69, Cys-73, Cys-103, Cys-106, Cys-109, and Cys-113.

The protein belongs to the complex I 23 kDa subunit family. NDH-1 is composed of 14 different subunits. Subunits NuoA, H, J, K, L, M, N constitute the membrane sector of the complex. It depends on [4Fe-4S] cluster as a cofactor.

It is found in the cell inner membrane. The enzyme catalyses a quinone + NADH + 5 H(+)(in) = a quinol + NAD(+) + 4 H(+)(out). In terms of biological role, NDH-1 shuttles electrons from NADH, via FMN and iron-sulfur (Fe-S) centers, to quinones in the respiratory chain. The immediate electron acceptor for the enzyme in this species is believed to be ubiquinone. Couples the redox reaction to proton translocation (for every two electrons transferred, four hydrogen ions are translocated across the cytoplasmic membrane), and thus conserves the redox energy in a proton gradient. The protein is NADH-quinone oxidoreductase subunit I 1 of Koribacter versatilis (strain Ellin345).